A 109-amino-acid chain; its full sequence is uncharacterized protein (109 aa).

The helical transmembrane segment at 63–85 (LFVKTFFACTYIIMLAFQVYIFL) threads the bilayer.

Its subcellular location is the membrane. This is an uncharacterized protein from Saccharomyces cerevisiae (strain ATCC 204508 / S288c) (Baker's yeast).